A 371-amino-acid chain; its full sequence is MAELQEVQITEEKPLLPGQTPEAAKEAELAARILLDQGQTHSVETPYGSVTFTVYGTPKPKRPAIFTYHDVGLNYKSCFQPLFQFGDMQEIIQNFVRVHVDAPGMEEGAPVFPLGYQYPSQDQLADMIPCILQYLNFSTIIGVGVGAGAYILSRYALNHPDTVEGLVLINIDPNAKGWMDWAAHKLTGLTSSIPEMILGHLFSQEELSGNSELIQKYRSLITHAPNLENIELYWNSYNNRRDLNFERGGEMTLKCPVMLVVGDQAPHEDAVVECNSKLDPTQTSFLKMADSGGQPQLTQPGKLTEAFKYFVQGMGYMASSCMTRLSRSRTASLTSAASIDGSRSRSRTLSQSSESGTLPSGPPGHTMEVSC.

The tract at residues 1–22 is disordered; that stretch reads MAELQEVQITEEKPLLPGQTPE. Ala-2 carries the post-translational modification N-acetylalanine. Thr-20 carries the post-translational modification Phosphothreonine. Phosphoserine is present on residues Ser-326 and Ser-328. Thr-330 carries the post-translational modification Phosphothreonine. Ser-332 is subject to Phosphoserine. Thr-334 bears the Phosphothreonine mark. A disordered region spans residues 334–371; the sequence is TSAASIDGSRSRSRTLSQSSESGTLPSGPPGHTMEVSC. Phosphoserine is present on residues Ser-335, Ser-338, and Ser-344. Thr-348 bears the Phosphothreonine mark. A phosphoserine mark is found at Ser-350, Ser-352, Ser-353, and Ser-355. Thr-357 carries the phosphothreonine modification. The residue at position 370 (Ser-370) is a Phosphoserine.

It belongs to the NDRG family. Broadly expressed, with highest levels in heart, liver, skeletal muscle and aorta.

The protein localises to the cytoplasm. Its subcellular location is the perinuclear region. It localises to the cell projection. It is found in the growth cone. In terms of biological role, contributes to the regulation of the Wnt signaling pathway. Down-regulates CTNNB1-mediated transcriptional activation of target genes, such as CCND1, and may thereby act as tumor suppressor. May be involved in dendritic cell and neuron differentiation. The chain is Protein NDRG2 (Ndrg2) from Rattus norvegicus (Rat).